The chain runs to 175 residues: MELSVVGGEPLLAVAMQQLLDLDLPDELERQLNPPTRAYVRDRRAMANTPMDVKELRASGALVLAVDMPGVAPADVRVEVEDGNVLAISGERRRPAGDGDDGGEGVKYLRMERRMGKFMRRFPLPESADLDGVRAEYKDGVLTVTVDKKPPPEPKKPRVVEVKVAGAGEPKGKGK.

In terms of domain architecture, sHSP spans D42–A165. The disordered stretch occupies residues T145 to K175. Basic and acidic residues predominate over residues V146–E161.

Belongs to the small heat shock protein (HSP20) family. In terms of assembly, may form oligomeric structures.

The protein resides in the cytoplasm. The polypeptide is 19.0 kDa class II heat shock protein (HSP19.0) (Oryza sativa subsp. japonica (Rice)).